The sequence spans 610 residues: Ecto-NOX disulfide-thiol exchanger 2 (610 aa).

The RRM domain maps to 128 to 207 (KTVFVGGLPE…GRLHVDFAQA (80 aa)). Coiled-coil stretches lie at residues 293–328 (IQSA…LSGI) and 381–505 (RREE…KESC).

The protein belongs to the ENOX family. Cu cation is required as a cofactor. Glycosylated. As to expression, found in the sera of cancer patients with a wide variety of cancers including breast, prostate, lung and ovarian cancers, leukemias, and lymphomas. Not found in the serum of healthy volunteers or patients with disorders other than cancer. Probably shed into serum by cancer cells. Found on the cell borders of renal, kidney and ovarian carcinomas but not on the borders of surrounding non-cancerous stromal cells.

It localises to the cell membrane. The protein localises to the secreted. The protein resides in the extracellular space. Inhibited by the antitumor sulfonylurea LY181984, the vabilloid capsaicin, and retinoids. Its function is as follows. May be involved in cell growth. Probably acts as a terminal oxidase of plasma electron transport from cytosolic NAD(P)H via hydroquinones to acceptors at the cell surface. Hydroquinone oxidase activity alternates with a protein disulfide-thiol interchange/oxidoreductase activity which may control physical membrane displacements associated with vesicle budding or cell enlargement. The activities oscillate with a period length of 22 minutes and play a role in control of the ultradian cellular biological clock. The sequence is that of Ecto-NOX disulfide-thiol exchanger 2 (ENOX2) from Homo sapiens (Human).